A 474-amino-acid polypeptide reads, in one-letter code: Adenosylhomocysteinase (474 aa).

Substrate is bound by residues Thr-53, Asp-135, and Glu-197. 198–200 is a binding site for NAD(+); the sequence is TTT. Positions 227 and 231 each coordinate substrate. Residues Asn-232, 261 to 266, Glu-284, Asn-319, 340 to 342, and Asn-388 each bind NAD(+); these read GYGDVG and IGH.

The protein belongs to the adenosylhomocysteinase family. It depends on NAD(+) as a cofactor.

It is found in the cytoplasm. The enzyme catalyses S-adenosyl-L-homocysteine + H2O = L-homocysteine + adenosine. Its pathway is amino-acid biosynthesis; L-homocysteine biosynthesis; L-homocysteine from S-adenosyl-L-homocysteine: step 1/1. May play a key role in the regulation of the intracellular concentration of adenosylhomocysteine. This chain is Adenosylhomocysteinase, found in Corynebacterium glutamicum (strain ATCC 13032 / DSM 20300 / JCM 1318 / BCRC 11384 / CCUG 27702 / LMG 3730 / NBRC 12168 / NCIMB 10025 / NRRL B-2784 / 534).